The chain runs to 142 residues: Large-conductance mechanosensitive channel (142 aa).

A run of 2 helical transmembrane segments spans residues Phe-10–Ser-30 and Gly-86–Val-106.

This sequence belongs to the MscL family. Homopentamer.

It localises to the cell inner membrane. Channel that opens in response to stretch forces in the membrane lipid bilayer. May participate in the regulation of osmotic pressure changes within the cell. This chain is Large-conductance mechanosensitive channel, found in Polaromonas naphthalenivorans (strain CJ2).